Here is a 556-residue protein sequence, read N- to C-terminus: Glutamine--tRNA ligase (556 aa).

The short motif at 33-43 is the 'HIGH' region element; that stretch reads PEPNGYLHIGH. ATP is bound by residues 34–36 and 40–46; these read EPN and HIGHAKS. Asp-66 and Tyr-210 together coordinate L-glutamine. ATP-binding positions include Thr-229, 259-260, and 267-269; these read RL and MSK. The 'KMSKS' region motif lies at 266-270; that stretch reads VMSKR.

The protein belongs to the class-I aminoacyl-tRNA synthetase family. In terms of assembly, monomer.

It localises to the cytoplasm. The catalysed reaction is tRNA(Gln) + L-glutamine + ATP = L-glutaminyl-tRNA(Gln) + AMP + diphosphate. This Clostridium kluyveri (strain ATCC 8527 / DSM 555 / NBRC 12016 / NCIMB 10680 / K1) protein is Glutamine--tRNA ligase.